Consider the following 470-residue polypeptide: Uronate isomerase (470 aa).

The protein belongs to the metallo-dependent hydrolases superfamily. Uronate isomerase family.

It carries out the reaction D-glucuronate = D-fructuronate. It catalyses the reaction aldehydo-D-galacturonate = keto-D-tagaturonate. The protein operates within carbohydrate metabolism; pentose and glucuronate interconversion. The chain is Uronate isomerase from Shigella boydii serotype 18 (strain CDC 3083-94 / BS512).